The primary structure comprises 542 residues: Exopolysaccharide phosphotransferase CpsY (542 aa).

The interval 522–542 (SPTVSAPLEDGQTANPAQTAR) is disordered. The segment covering 533–542 (QTANPAQTAR) has biased composition (polar residues).

This sequence belongs to the stealth family.

This Mycobacterium leprae (strain TN) protein is Exopolysaccharide phosphotransferase CpsY (cpsY).